Here is a 133-residue protein sequence, read N- to C-terminus: MSKLNKSIVAEFESAQITRELPKFSQGDTVVVNVKVKEGSRERVQAYEGVVIATKNAGLNSSFTVRKISHGYGVERVFQTHSAIIDSVEVKRRGKVRAGKLYYLRGLEGKAARIKEDLAAAAAAKAARLAEKA.

This sequence belongs to the bacterial ribosomal protein bL19 family.

This protein is located at the 30S-50S ribosomal subunit interface and may play a role in the structure and function of the aminoacyl-tRNA binding site. The protein is Large ribosomal subunit protein bL19 of Stenotrophomonas maltophilia (strain K279a).